The following is a 157-amino-acid chain: Arginine repressor (157 aa).

It belongs to the ArgR family.

The protein localises to the cytoplasm. It participates in amino-acid biosynthesis; L-arginine biosynthesis [regulation]. Functionally, regulates arginine biosynthesis genes. The protein is Arginine repressor of Bacteroides thetaiotaomicron (strain ATCC 29148 / DSM 2079 / JCM 5827 / CCUG 10774 / NCTC 10582 / VPI-5482 / E50).